Consider the following 457-residue polypeptide: tRNA modification GTPase MnmE (457 aa).

3 residues coordinate (6S)-5-formyl-5,6,7,8-tetrahydrofolate: Arg24, Glu81, and Lys124. Residues 220 to 379 form the TrmE-type G domain; it reads GIQLVLAGAP…LKQKILHVVG (160 aa). Asn230 is a binding site for K(+). Residues 230-235, 249-255, and 274-277 contribute to the GTP site; these read NVGKSS, TPIAGTT, and DTAG. Ser234 serves as a coordination point for Mg(2+). K(+)-binding residues include Thr249, Ile251, and Thr254. Mg(2+) is bound at residue Thr255. Lys457 lines the (6S)-5-formyl-5,6,7,8-tetrahydrofolate pocket.

Belongs to the TRAFAC class TrmE-Era-EngA-EngB-Septin-like GTPase superfamily. TrmE GTPase family. As to quaternary structure, homodimer. Heterotetramer of two MnmE and two MnmG subunits. K(+) is required as a cofactor.

It is found in the cytoplasm. Exhibits a very high intrinsic GTPase hydrolysis rate. Involved in the addition of a carboxymethylaminomethyl (cmnm) group at the wobble position (U34) of certain tRNAs, forming tRNA-cmnm(5)s(2)U34. The protein is tRNA modification GTPase MnmE of Polynucleobacter asymbioticus (strain DSM 18221 / CIP 109841 / QLW-P1DMWA-1) (Polynucleobacter necessarius subsp. asymbioticus).